We begin with the raw amino-acid sequence, 305 residues long: Undecaprenyl-diphosphatase (305 aa).

The next 8 membrane-spanning stretches (helical) occupy residues 18–38, 55–75, 103–123, 130–150, 187–207, 225–245, 246–266, and 284–304; these read GVTE…PALV, YLAF…VFFW, WLIV…EQLF, PVPA…GEVL, GVLI…RSGI, FSFL…IPEL, FGPL…ASFV, and LTPF…WLAL.

This sequence belongs to the UppP family.

It localises to the cell membrane. The enzyme catalyses di-trans,octa-cis-undecaprenyl diphosphate + H2O = di-trans,octa-cis-undecaprenyl phosphate + phosphate + H(+). Its function is as follows. Catalyzes the dephosphorylation of undecaprenyl diphosphate (UPP). Confers resistance to bacitracin. This is Undecaprenyl-diphosphatase from Mycolicibacterium paratuberculosis (strain ATCC BAA-968 / K-10) (Mycobacterium paratuberculosis).